A 283-amino-acid polypeptide reads, in one-letter code: Acetylglutamate kinase (283 aa).

Substrate is bound by residues 63-64 (GG), Arg-85, and Asn-178.

It belongs to the acetylglutamate kinase family. ArgB subfamily.

It localises to the plastid. Its subcellular location is the chloroplast. It catalyses the reaction N-acetyl-L-glutamate + ATP = N-acetyl-L-glutamyl 5-phosphate + ADP. The protein operates within amino-acid biosynthesis; L-arginine biosynthesis; N(2)-acetyl-L-ornithine from L-glutamate: step 2/4. Its function is as follows. Catalyzes the ATP-dependent phosphorylation of N-acetyl-L-glutamate. The sequence is that of Acetylglutamate kinase from Porphyra purpurea (Red seaweed).